A 597-amino-acid polypeptide reads, in one-letter code: Gamma-terpinene synthase, chloroplastic (597 aa).

A chloroplast-targeting transit peptide spans 1 to 47; the sequence is MATLSMQVSILNKQLKNLNSFGMRASKLPLVARRVDVSTTRLRPICS. Mn(2+)-binding residues include Asp350 and Asp354. The DDXXD motif motif lies at 350 to 354; the sequence is DDVYD. Homodimerization regions lie at residues 356 to 362 and 428 to 464; these read YGTLDEL and EAKW…YFTL. Mn(2+) contacts are provided by Asp494 and Glu502.

This sequence belongs to the terpene synthase family. In terms of assembly, homodimer. Mn(2+) is required as a cofactor. Requires Mg(2+) as cofactor.

It is found in the plastid. It localises to the chloroplast. The catalysed reaction is (2E)-geranyl diphosphate = gamma-terpinene + diphosphate. The protein operates within secondary metabolite biosynthesis; terpenoid biosynthesis. Involved in the biosynthesis of phenolic monoterpenes natural products thymol and carvacrol which have a broad range of biological activities acting as antimicrobial compounds, insecticides, antioxidants and pharmaceutical agents. Monoterpene synthase which catalyzes the conversion of geranyl diphosphate (GPP) to gamma-terpinene and minor amounts of other monoterpenes (e.g. alpha-thujene, alpha-terpinene, myrcene, sabinene, (+)-R-limonene, alpha-pinene and alpha-phellandrene). This is Gamma-terpinene synthase, chloroplastic from Thymus caespititius (Cretan thyme).